A 259-amino-acid polypeptide reads, in one-letter code: Hemin import ATP-binding protein HmuV (259 aa).

One can recognise an ABC transporter domain in the interval 6–242; the sequence is IQGRDLCVTY…ERIEQVYGYQ (237 aa). 38–45 is a binding site for ATP; it reads GPNGAGKS.

It belongs to the ABC transporter superfamily. Heme (hemin) importer (TC 3.A.1.14.5) family. In terms of assembly, the complex is composed of two ATP-binding proteins (HmuV), two transmembrane proteins (HmuU) and a solute-binding protein (HmuT).

Its subcellular location is the cell inner membrane. In terms of biological role, part of the ABC transporter complex HmuTUV involved in hemin import. Responsible for energy coupling to the transport system. In Vibrio cholerae serotype O1 (strain ATCC 39315 / El Tor Inaba N16961), this protein is Hemin import ATP-binding protein HmuV.